Reading from the N-terminus, the 790-residue chain is MGTRKKVQAFVRVRPTDDFAHEMIKYGEDNKSIDIHLKKDTRRGVVNNQQTDWSFKLDGVLHNASQDLVYETVAKDAVSQALDGYNGTIMCYGQTGAGKTYTMTGATENYKHRGILPRALQQVFRMIEERPTHAITVRVSYLEIYNENLFDLLSTLPYVGPSVTPMTIVENPQGIFIKGLSVHLTSQEEDAFSLLFEGETNRIIASHTMNKNSSRSHCIFTIYMEAHSRTLSDEKYITSKINLVDLAGSERLSKTGSEGRVLKEATYINKSLSFLEQAIIALGDQNRDHVPFRQSKLTHALKDSLGGNCNMVLVTNIYGEAAQLDETLSSLRFASRMKLVTTEPAINEKYDAERMVKNLEKELALLKQELAIHDSLSNRTLVNYDPMDEIQIAEINSQVRRYLEGTLDEIDIINLRQIQEVFNQFRVVLSQQEQEVESALRRKYTLIDKNDFAAISAVQKVGLMDIEGNLVGEPDGQSFGLGVAPFSVKPGKKPKTKKTPKDQFSSSARKEGASSPVSGKDFDVASISKTQLIPSSKDGDLKDMLARERETSSIEPLISDSPKEELRAPRPSTPPSRTVAFEEFKNERGSEINRIFKENKSILNERKKRASETTQRINAIKQEIDETKDALNFQKSLREKQGEYENKGLMIIDEEEFLLILKLKDLKKQYRNEYQELRDLRAEIQYCQRLVDQCRHRLLMEFDIWYNESFMIPEDVQVALKLGSSIRPGMVPISRIVCLGEDDQDRFSHLQQTVLPEGLDSITFYNAKVKTDQKHNYMKTMVGLQQSHRK.

In terms of domain architecture, Kinesin motor spans Lys6–Val340. ATP contacts are provided by residues Arg12 to Arg14 and Gly93 to Thr100. Residues Thr342–Arg442 adopt a coiled-coil conformation. Residues Gly482 to Asp521 are disordered. The residue at position 530 (Thr530) is a Phosphothreonine. The segment at Arg547–Arg577 is disordered. Residues Lys600 to Arg695 adopt a coiled-coil conformation.

This sequence belongs to the TRAFAC class myosin-kinesin ATPase superfamily. Kinesin family. Interacts with HYDIN. Highly expressed in the testis (at protein level). Weakly expressed in the brain, thymus, lung and heart.

The protein localises to the cytoplasm. The protein resides in the cytoskeleton. It is found in the cell projection. Its subcellular location is the cilium. It localises to the flagellum. The protein localises to the flagellum axoneme. In terms of biological role, essential for normal male fertility and for progressive motility of spermatozoa. The sequence is that of Kinesin-like protein KIF9 (Kif9) from Mus musculus (Mouse).